We begin with the raw amino-acid sequence, 253 residues long: MMTESILQIRDLSVYYNQKKTLKDVSLDLYPNEITALIGPSGSGKSTLLRSINRMNDLNPEVTITGSIVYNGHNIYSPRTDTVDLRKEIGMVFQQPNPFPMSIYENVVYGLRLKGIRDKSILDHAVESSLKGASIWNEVKDRLHDSAVGLSGGQQQRVCIARVLATSPRIILLDEPTSALDPISAGKIEETLLLLKKDYTLAIVTRSMQQASRLSDRTGFFLEGDLLECGPTKAMFMNPKRKETEDYISGKFG.

An ABC transporter domain is found at leucine 7–isoleucine 248. Glycine 39–serine 46 contributes to the ATP binding site.

Belongs to the ABC transporter superfamily. Phosphate importer (TC 3.A.1.7) family. As to quaternary structure, the complex is composed of two ATP-binding proteins (PstB), two transmembrane proteins (PstC and PstA) and a solute-binding protein (PstS).

The protein resides in the cell membrane. It catalyses the reaction phosphate(out) + ATP + H2O = ADP + 2 phosphate(in) + H(+). Its function is as follows. Part of the ABC transporter complex PstSACB involved in phosphate import. Responsible for energy coupling to the transport system. The sequence is that of Phosphate import ATP-binding protein PstB 1 from Streptococcus pyogenes serotype M12 (strain MGAS9429).